The following is a 130-amino-acid chain: Phosphoribosyl-AMP cyclohydrolase (130 aa).

Asp78 is a binding site for Mg(2+). Cys79 contributes to the Zn(2+) binding site. 2 residues coordinate Mg(2+): Asp80 and Asp82. Residues Cys96 and Cys103 each coordinate Zn(2+).

It belongs to the PRA-CH family. Homodimer. The cofactor is Mg(2+). Requires Zn(2+) as cofactor.

The protein resides in the cytoplasm. It catalyses the reaction 1-(5-phospho-beta-D-ribosyl)-5'-AMP + H2O = 1-(5-phospho-beta-D-ribosyl)-5-[(5-phospho-beta-D-ribosylamino)methylideneamino]imidazole-4-carboxamide. It functions in the pathway amino-acid biosynthesis; L-histidine biosynthesis; L-histidine from 5-phospho-alpha-D-ribose 1-diphosphate: step 3/9. Its function is as follows. Catalyzes the hydrolysis of the adenine ring of phosphoribosyl-AMP. The sequence is that of Phosphoribosyl-AMP cyclohydrolase from Nitrosospira multiformis (strain ATCC 25196 / NCIMB 11849 / C 71).